Here is a 381-residue protein sequence, read N- to C-terminus: Chaperone protein DnaJ (381 aa).

The region spanning 5-70 is the J domain; that stretch reads DYYDVLGVSK…EKKAAYDRFG (66 aa). The CR-type zinc finger occupies 140 to 218; that stretch reads GLQKTINVPT…CRGQGRVEKD (79 aa). Positions 153, 156, 170, 173, 192, 195, 206, and 209 each coordinate Zn(2+). CXXCXGXG motif repeat units lie at residues 153 to 160, 170 to 177, 192 to 199, and 206 to 213; these read CSSCEGTG, CPTCSGMG, CPTCSGLG, and CKSCRGQG.

It belongs to the DnaJ family. Homodimer. Requires Zn(2+) as cofactor.

It is found in the cytoplasm. In terms of biological role, participates actively in the response to hyperosmotic and heat shock by preventing the aggregation of stress-denatured proteins and by disaggregating proteins, also in an autonomous, DnaK-independent fashion. Unfolded proteins bind initially to DnaJ; upon interaction with the DnaJ-bound protein, DnaK hydrolyzes its bound ATP, resulting in the formation of a stable complex. GrpE releases ADP from DnaK; ATP binding to DnaK triggers the release of the substrate protein, thus completing the reaction cycle. Several rounds of ATP-dependent interactions between DnaJ, DnaK and GrpE are required for fully efficient folding. Also involved, together with DnaK and GrpE, in the DNA replication of plasmids through activation of initiation proteins. The polypeptide is Chaperone protein DnaJ (Ruegeria pomeroyi (strain ATCC 700808 / DSM 15171 / DSS-3) (Silicibacter pomeroyi)).